A 250-amino-acid polypeptide reads, in one-letter code: 5'-nucleotidase SurE (250 aa).

A divalent metal cation-binding residues include Asp-8, Asp-9, Ser-39, and Asn-91.

This sequence belongs to the SurE nucleotidase family. A divalent metal cation serves as cofactor.

Its subcellular location is the cytoplasm. It catalyses the reaction a ribonucleoside 5'-phosphate + H2O = a ribonucleoside + phosphate. Nucleotidase that shows phosphatase activity on nucleoside 5'-monophosphates. The sequence is that of 5'-nucleotidase SurE from Leptospira borgpetersenii serovar Hardjo-bovis (strain JB197).